A 353-amino-acid chain; its full sequence is MPKSTVRPGAEIVGESAALKEVLEIAQIVARSNSPVLLRGESGTGKEFFAKLIHDSSSRHEKPFVKLNCAALSAGVLESELFGHEKGAFTGATSQKEGRFELAHGGTLLLDEIGEISAEFQAKLLRVLQEGELERVGGTRTLKVNVRLVCATNKDLETAVAAGEFRADLYYRINVVPITLPPLRQRDGDIPRLAQKFLQRFNRENGRSLSFAPATLDILSKCEFPGNIRELQNCTQRTATLARSDVIVPQDLACEQGRCYSPILKKAVAEQVGKGAIHGLARGETESMGQPCDVGVFAAETVMGQSGLIGRERLEQAMATAGWVQAKAARLLGRTPRQVGYSLRRHGIERKVF.

In terms of domain architecture, Sigma-54 factor interaction spans 12-240 (IVGESAALKE…LQNCTQRTAT (229 aa)). ATP contacts are provided by residues 40 to 47 (GESGTGKE) and 103 to 112 (AHGGTLLLDE). Residues 325-344 (QAKAARLLGRTPRQVGYSLR) constitute a DNA-binding region (H-T-H motif).

In terms of assembly, interacts with sigma-54.

In terms of biological role, required for activation of most nif operons, which are directly involved in nitrogen fixation. This chain is Nif-specific regulatory protein (nifA), found in Rhizobium leguminosarum bv. trifolii.